We begin with the raw amino-acid sequence, 336 residues long: Apyrase (336 aa).

Positions 1–21 (MFLKFCVVAFAICLSINLSEG) are cleaved as a signal peptide. Asn-209 carries an N-linked (GlcNAc...) asparagine glycan.

The protein belongs to the apyrase family. The cofactor is Ca(2+). In terms of tissue distribution, salivary gland (at protein level).

It is found in the secreted. The enzyme catalyses a ribonucleoside 5'-triphosphate + 2 H2O = a ribonucleoside 5'-phosphate + 2 phosphate + 2 H(+). Facilitates hematophagy by inhibiting ADP- and collagen-dependent platelet aggregation in the host. Cleaves adenosine triphosphate (ATP) and adenosine diphosphate (ADP) to adenosine monophosphate (AMP) and inorganic phosphate in calcium-dependent manner. This Phlebotomus duboscqi (Sandfly) protein is Apyrase.